The chain runs to 98 residues: Large ribosomal subunit protein uL23 (98 aa).

This sequence belongs to the universal ribosomal protein uL23 family. As to quaternary structure, part of the 50S ribosomal subunit. Contacts protein L29, and trigger factor when it is bound to the ribosome.

Functionally, one of the early assembly proteins it binds 23S rRNA. One of the proteins that surrounds the polypeptide exit tunnel on the outside of the ribosome. Forms the main docking site for trigger factor binding to the ribosome. In Rickettsia felis (strain ATCC VR-1525 / URRWXCal2) (Rickettsia azadi), this protein is Large ribosomal subunit protein uL23.